Here is a 209-residue protein sequence, read N- to C-terminus: Uracil phosphoribosyltransferase (209 aa).

5-phospho-alpha-D-ribose 1-diphosphate-binding positions include arginine 79, arginine 104, and 131–139; that span reads DPMLATGGS. Residues isoleucine 194 and 199-201 each bind uracil; that span reads GDA. Position 200 (aspartate 200) interacts with 5-phospho-alpha-D-ribose 1-diphosphate.

This sequence belongs to the UPRTase family. Requires Mg(2+) as cofactor.

The catalysed reaction is UMP + diphosphate = 5-phospho-alpha-D-ribose 1-diphosphate + uracil. It functions in the pathway pyrimidine metabolism; UMP biosynthesis via salvage pathway; UMP from uracil: step 1/1. Its activity is regulated as follows. Allosterically activated by GTP. Functionally, catalyzes the conversion of uracil and 5-phospho-alpha-D-ribose 1-diphosphate (PRPP) to UMP and diphosphate. In Listeria monocytogenes serovar 1/2a (strain ATCC BAA-679 / EGD-e), this protein is Uracil phosphoribosyltransferase.